A 568-amino-acid chain; its full sequence is 2-succinyl-5-enolpyruvyl-6-hydroxy-3-cyclohexene-1-carboxylate synthase (568 aa).

It belongs to the TPP enzyme family. MenD subfamily. As to quaternary structure, homodimer. It depends on Mg(2+) as a cofactor. Mn(2+) serves as cofactor. The cofactor is thiamine diphosphate.

It catalyses the reaction isochorismate + 2-oxoglutarate + H(+) = 5-enolpyruvoyl-6-hydroxy-2-succinyl-cyclohex-3-ene-1-carboxylate + CO2. The protein operates within quinol/quinone metabolism; 1,4-dihydroxy-2-naphthoate biosynthesis; 1,4-dihydroxy-2-naphthoate from chorismate: step 2/7. Its pathway is quinol/quinone metabolism; menaquinone biosynthesis. In terms of biological role, catalyzes the thiamine diphosphate-dependent decarboxylation of 2-oxoglutarate and the subsequent addition of the resulting succinic semialdehyde-thiamine pyrophosphate anion to isochorismate to yield 2-succinyl-5-enolpyruvyl-6-hydroxy-3-cyclohexene-1-carboxylate (SEPHCHC). This chain is 2-succinyl-5-enolpyruvyl-6-hydroxy-3-cyclohexene-1-carboxylate synthase, found in Actinobacillus pleuropneumoniae serotype 5b (strain L20).